A 326-amino-acid chain; its full sequence is Polyprenal reductase (326 aa).

A run of 5 helical transmembrane segments spans residues 26–46 (MMFGTFIATIVFFGGLMTFVE), 84–104 (HFYTFALFWSWLAFYVLVSTV), 167–187 (INLSHYAVGYVHYFGAVIALL), 212–232 (ILYLGVFFLAWQQQYASNMIL), and 256–276 (LFNLLSSPHMFLEVVMYFCIA).

The protein belongs to the steroid 5-alpha reductase family. Polyprenal reductase subfamily.

It is found in the endoplasmic reticulum membrane. It catalyses the reaction a di-trans,poly-cis-dolichal + NADP(+) = a di-trans,poly-cis-polyprenal + NADPH + H(+). The protein operates within protein modification; protein glycosylation. Functionally, plays a key role in early steps of protein N-linked glycosylation by being involved in the conversion of polyprenol into dolichol. Acts as a polyprenal reductase that mediates the reduction of polyprenal into dolichal in a NADP-dependent mechanism. Dolichols are required for the synthesis of dolichol-linked monosaccharides and the oligosaccharide precursor used for N-glycosylation. The protein is Polyprenal reductase of Drosophila melanogaster (Fruit fly).